Here is a 515-residue protein sequence, read N- to C-terminus: GMP synthase [glutamine-hydrolyzing] (515 aa).

Positions 6-198 (KVIILDFGSQ…VFKVAGLKAD (193 aa)) constitute a Glutamine amidotransferase type-1 domain. C83 serves as the catalytic Nucleophile. Active-site residues include H172 and E174. The 192-residue stretch at 199-390 (WTMSSFVENC…LGLPEFIIWR (192 aa)) folds into the GMPS ATP-PPase domain. 226–232 (SGGIDST) serves as a coordination point for ATP.

Homodimer.

The catalysed reaction is XMP + L-glutamine + ATP + H2O = GMP + L-glutamate + AMP + diphosphate + 2 H(+). It participates in purine metabolism; GMP biosynthesis; GMP from XMP (L-Gln route): step 1/1. In terms of biological role, catalyzes the synthesis of GMP from XMP. The protein is GMP synthase [glutamine-hydrolyzing] of Maridesulfovibrio salexigens (strain ATCC 14822 / DSM 2638 / NCIMB 8403 / VKM B-1763) (Desulfovibrio salexigens).